Here is a 174-residue protein sequence, read N- to C-terminus: Regenerating islet-derived protein 3-gamma (174 aa).

The signal sequence occupies residues 1–26; the sequence is MLPRITITIMSWMLLSCLMLLSQVQG. Residues 27–37 constitute a propeptide that is removed on maturation; the sequence is EVAKKDAPSSR. Intrachain disulfides connect cysteine 40/cysteine 51, cysteine 68/cysteine 170, and cysteine 145/cysteine 162. Positions 47–171 constitute a C-type lectin domain; it reads YGSYCYALFS…CNLELPYVCK (125 aa). The segment at 103-118 is sufficient to activate EXTL3; sequence WIGLHDPTLGYEPNRG. Residue histidine 107 participates in Zn(2+) binding. Positions 114-116 match the EPN motif; the sequence is EPN. The Zn(2+) site is built by glutamate 121 and histidine 144.

As to quaternary structure, forms a hexameric membrane-permeabilizing oligomeric pore on membrane phospholipids. The hexamer is formed by three dimers related by helical symmetry. Forms filaments, filamentation traps pore complexes and limits damage to host cells. Interacts with EXTL3. Proteolytic processing by trypsin removes an inhibitory N-terminal propeptide and is essential for peptidoglycan binding and antibacterial activity. Predominantly expressed in the small intestine, including Paneth cells (at protein level). Hardly detectable in the colon (at protein level). Highly expressed in the lung epithelium during methicillin-resistant S.aureus infection and allergic airway inflammation (at protein level). Skin injury increases its epidermal expression. Also expressed in the pancreas. Expressed by nocireceptors.

The protein resides in the secreted. It is found in the cytoplasm. Lipopolysaccharide inhibits pore-forming activity, explaining why is bactericidal for Gram-positive but not Gram-negative bacteria. Its function is as follows. Bactericidal C-type lectin which acts exclusively against Gram-positive bacteria and mediates bacterial killing by binding to surface-exposed carbohydrate moieties of peptidoglycan. Restricts bacterial colonization of the intestinal epithelial surface and consequently limits activation of adaptive immune responses by the microbiota. Functionally, acts as a hormone in response to different stimuli like anti-inflammatory signals, such as IL17A, or gut microbiome. Is secreted by different cell types to activate its receptor EXTL3 and induce cell specific signaling pathways. Induced by IL17A in keratinocytes, regulates keratinocyte proliferation and differentiation after skin injury. In parallel, inhibits skin inflammation through the inhibition of inflammatory cytokines such as IL6 and TNF. Induced by IL22 in lung epithelial cells, inhibits cytokine production and regulates allergic airway inflammation. Induced in small intestine by inulin-enriched diet and Lactobacillus gasseri enriched microbiome, plays a role in the improvement of gut barrier function, the regulation of energy balance and glucose levels. Modulates microbiota composition in duodenal contents. Produced by nociceptor in response to endotoxins, prevents endotoxic death by targeting kynurenine pathway in microglia. In terms of biological role, has bacteriostatic activity. Has bactericidal activity against L.monocytogenes and methicillin-resistant S.aureus. This Mus musculus (Mouse) protein is Regenerating islet-derived protein 3-gamma.